We begin with the raw amino-acid sequence, 663 residues long: DNA topoisomerase 4 subunit B (663 aa).

ATP contacts are provided by residues Tyr7, Asn47, Asp74, 114–120 (GLHGVGA), and Lys341. The tract at residues 386–418 (REAARKAREDARSGKKNKRKDTLLSGKLTPAQS) is disordered. Over residues 387–398 (EAARKAREDARS) the composition is skewed to basic and acidic residues. The Toprim domain maps to 424–538 (NELYLVEGDS…AGRVFIALPP (115 aa)). The Mg(2+) site is built by Glu430, Asp503, and Asp505.

Belongs to the type II topoisomerase family. ParE type 2 subfamily. In terms of assembly, heterotetramer composed of ParC and ParE. The cofactor is Mg(2+). Requires Mn(2+) as cofactor. It depends on Ca(2+) as a cofactor.

It catalyses the reaction ATP-dependent breakage, passage and rejoining of double-stranded DNA.. Topoisomerase IV is essential for chromosome segregation. It relaxes supercoiled DNA. Performs the decatenation events required during the replication of a circular DNA molecule. The polypeptide is DNA topoisomerase 4 subunit B (Staphylococcus aureus (strain MRSA252)).